Here is a 632-residue protein sequence, read N- to C-terminus: tRNA uridine 5-carboxymethylaminomethyl modification enzyme MnmG (632 aa).

13 to 18 (GGGHAG) serves as a coordination point for FAD. An NAD(+)-binding site is contributed by 273-287 (GPRYCPSIEDKIHRF).

It belongs to the MnmG family. In terms of assembly, homodimer. Heterotetramer of two MnmE and two MnmG subunits. FAD serves as cofactor.

It localises to the cytoplasm. In terms of biological role, NAD-binding protein involved in the addition of a carboxymethylaminomethyl (cmnm) group at the wobble position (U34) of certain tRNAs, forming tRNA-cmnm(5)s(2)U34. This chain is tRNA uridine 5-carboxymethylaminomethyl modification enzyme MnmG, found in Psychrobacter arcticus (strain DSM 17307 / VKM B-2377 / 273-4).